Here is a 194-residue protein sequence, read N- to C-terminus: uncharacterized protein (194 aa).

A signal peptide spans 1–22; it reads MNKVTKTAIAGLLALFAGNAAA. Cys38 and Cys78 form a disulfide bridge.

The protein belongs to the fimbrial protein family.

The protein localises to the fimbrium. Functionally, part of the yraHIJK fimbrial operon. Could contribute to adhesion to various surfaces in specific environmental niches. Increases adhesion to eukaryotic T24 bladder epithelial cells in the absence of fim operon. This is an uncharacterized protein from Escherichia coli (strain K12).